An 804-amino-acid polypeptide reads, in one-letter code: Probable exo-1,4-beta-xylosidase xlnD (804 aa).

The N-terminal stretch at 1–26 is a signal peptide; the sequence is MAHSMSRPVAATAAALLALALPQALA. Asparagine 29, asparagine 124, asparagine 148, asparagine 242, and asparagine 251 each carry an N-linked (GlcNAc...) asparagine glycan. Residue aspartate 315 is part of the active site. N-linked (GlcNAc...) asparagine glycosylation is found at asparagine 357, asparagine 390, asparagine 413, asparagine 444, asparagine 455, asparagine 573, asparagine 576, asparagine 665, asparagine 696, and asparagine 718.

It belongs to the glycosyl hydrolase 3 family.

It is found in the secreted. It carries out the reaction Hydrolysis of (1-&gt;4)-beta-D-xylans, to remove successive D-xylose residues from the non-reducing termini.. It functions in the pathway glycan degradation; xylan degradation. Functionally, xylan 1,4-beta-xylosidase involved in the hydrolysis of xylan, a major structural heterogeneous polysaccharide found in plant biomass representing the second most abundant polysaccharide in the biosphere, after cellulose. The sequence is that of Probable exo-1,4-beta-xylosidase xlnD (xlnD) from Aspergillus niger (strain ATCC MYA-4892 / CBS 513.88 / FGSC A1513).